A 595-amino-acid polypeptide reads, in one-letter code: Probable xyloglucan glycosyltransferase 9 (595 aa).

2 helical membrane passes run 30–50 and 77–97; these read AFVVLSVLLLIVELGAYINGW and ATYVAPFIQFLTDACVVLFLI. Residue Asp-177 is part of the active site. Asp-236 and Asp-238 together coordinate substrate. Residue Asp-330 is part of the active site. 4 helical membrane-spanning segments follow: residues 408–428, 433–453, 545–564, and 570–590; these read LILPFYSFTLFCIILPMTMFV, LPDWVVCYIPALMSLLNILPS, IYKKELALSLLLLTAAARSL, and IHFYFLLFQGISFLLVGLDLI.

It belongs to the glycosyltransferase 2 family. Plant cellulose synthase-like C subfamily.

The protein localises to the golgi apparatus membrane. Probable beta-1,4-glucan synthase rather involved in the synthesis of the xyloglucan backbone than cellulose. Seems to work simultaneously with xyloglucan 6-xylosyltransferase. Xyloglucan is a noncellulosic polysaccharides of plant cell wall and consists of a glucan backbone substituted by xylose, galactose and fucose. The sequence is that of Probable xyloglucan glycosyltransferase 9 (CSLC9) from Oryza sativa subsp. japonica (Rice).